The following is a 38-amino-acid chain: Large ribosomal subunit protein bL36 (38 aa).

Belongs to the bacterial ribosomal protein bL36 family.

The polypeptide is Large ribosomal subunit protein bL36 (Prochlorococcus marinus (strain SARG / CCMP1375 / SS120)).